Consider the following 622-residue polypeptide: Palmitoyltransferase ZDHHC13 (622 aa).

N-acetylmethionine is present on Met1. Residues 1 to 291 lie on the Cytoplasmic side of the membrane; that stretch reads MEGPGLGSQC…RLWRWLQKCE (291 aa). ANK repeat units follow at residues 43-78, 81-110, 115-144, 148-177, 181-211, 216-245, and 249-277; these read PLIE…VRQP, ENVS…VVDQ, LNST…DPTL, EGFS…SVNM, NGQT…SLNV, HQNT…SLDI, and KGET…KMRA. A helical membrane pass occupies residues 292-312; it reads LFLLLMLSVITMWAIGYILDF. Residues 313 to 320 are Lumenal-facing; sequence NSDSWLLK. The chain crosses the membrane as a helical span at residues 321-341; it reads GCLLVTLFFLTSLFPRFLVGY. Residues 342-347 are Cytoplasmic-facing; the sequence is KNLVYL. The chain crosses the membrane as a helical span at residues 348–368; the sequence is PTAFLLSSVFWIFMTWFILFF. Topologically, residues 369–370 are lumenal; the sequence is PD. Residues 371 to 391 form a helical membrane-spanning segment; it reads LAGAPFYFSFIFSIVAFLYFF. Topologically, residues 392-470 are cytoplasmic; it reads YKTWATDPGF…RCIGFGNHHY (79 aa). The DHHC domain maps to 426 to 476; it reads TFCTSCLIRKPLRSLHCHVCNCCVARYDQHCLWTGRCIGFGNHHYYIFFLF. Residue Cys456 is the S-palmitoyl cysteine intermediate of the active site. A helical transmembrane segment spans residues 471–491; that stretch reads YIFFLFFLSMVCGWIIYGSFI. Residues 492 to 518 lie on the Lumenal side of the membrane; sequence YLSSHCATTFKEDGLWTYLNQIVACSP. Residues 519–539 form a helical membrane-spanning segment; that stretch reads WVLYILMLATFHFSWSTFLLL. The Cytoplasmic segment spans residues 540–622; that stretch reads NQLFQIAFLG…PAREKVLRSV (83 aa).

It belongs to the DHHC palmitoyltransferase family. AKR/ZDHHC17 subfamily. As to quaternary structure, interacts (via ANK repeats) with CLIP3. Interacts (via ANK repeats) with DNAJC5 (via C-terminus). Interacts (via ANK repeats) with HTT. Interacts (via ANK repeats) with MAP6. Interacts (via ANK repeats) with SNAP23. Interacts (via ANK repeats) with SNAP25. May interact (via ANK repeats) with SPRED2.

The protein localises to the golgi apparatus membrane. It localises to the cytoplasmic vesicle membrane. The catalysed reaction is L-cysteinyl-[protein] + hexadecanoyl-CoA = S-hexadecanoyl-L-cysteinyl-[protein] + CoA. Palmitoyltransferase that could catalyze the addition of palmitate onto various protein substrates. Palmitoyltransferase for HTT and GAD2. May play a role in Mg(2+) transport. This is Palmitoyltransferase ZDHHC13 from Homo sapiens (Human).